The chain runs to 141 residues: UPF0310 protein Mflv_0785 (141 aa).

This sequence belongs to the UPF0310 family.

This is UPF0310 protein Mflv_0785 from Mycolicibacterium gilvum (strain PYR-GCK) (Mycobacterium gilvum (strain PYR-GCK)).